The sequence spans 353 residues: Phospho-N-acetylmuramoyl-pentapeptide-transferase (353 aa).

10 consecutive transmembrane segments (helical) span residues Leu24–Ala44, Thr66–Ala86, Leu88–Phe108, Phe129–Asp149, Pro160–Ala180, Gly192–Ala212, Val229–Tyr249, Val256–Val276, Ile281–Val301, and Lys330–Leu350.

The protein belongs to the glycosyltransferase 4 family. MraY subfamily. Mg(2+) serves as cofactor.

The protein resides in the cell inner membrane. It carries out the reaction UDP-N-acetyl-alpha-D-muramoyl-L-alanyl-gamma-D-glutamyl-meso-2,6-diaminopimeloyl-D-alanyl-D-alanine + di-trans,octa-cis-undecaprenyl phosphate = di-trans,octa-cis-undecaprenyl diphospho-N-acetyl-alpha-D-muramoyl-L-alanyl-D-glutamyl-meso-2,6-diaminopimeloyl-D-alanyl-D-alanine + UMP. Its pathway is cell wall biogenesis; peptidoglycan biosynthesis. In terms of biological role, catalyzes the initial step of the lipid cycle reactions in the biosynthesis of the cell wall peptidoglycan: transfers peptidoglycan precursor phospho-MurNAc-pentapeptide from UDP-MurNAc-pentapeptide onto the lipid carrier undecaprenyl phosphate, yielding undecaprenyl-pyrophosphoryl-MurNAc-pentapeptide, known as lipid I. The sequence is that of Phospho-N-acetylmuramoyl-pentapeptide-transferase from Helicobacter acinonychis (strain Sheeba).